A 277-amino-acid polypeptide reads, in one-letter code: MAVKKYRPYTPSRRQMTTADFSGLTKKRPEKALTVPLPKTGGRNNHGRITSRFIGGGHKRLYRIIDFKRRDKANVPAKVAAIEYDPNRSARIALLHYVDGEKRYILAPEGLTVGQTVNAGPEAEPKLGNALPLRFVPVGAVVHAVELVPGKGAQLARSAGTSIQVQGKERDYVILRLPSGELRRIHSECYATIGTVGNAEHKNIVLGKAGRSRWLGRKPHQRGSAMNPVDHPHGGGEGRTGAGRVPVSPWGQPAKGLKTRKKRKISDRFIITRRGGK.

The disordered stretch occupies residues 215–263 (LGRKPHQRGSAMNPVDHPHGGGEGRTGAGRVPVSPWGQPAKGLKTRKKR).

It belongs to the universal ribosomal protein uL2 family. In terms of assembly, part of the 50S ribosomal subunit. Forms a bridge to the 30S subunit in the 70S ribosome.

In terms of biological role, one of the primary rRNA binding proteins. Required for association of the 30S and 50S subunits to form the 70S ribosome, for tRNA binding and peptide bond formation. It has been suggested to have peptidyltransferase activity; this is somewhat controversial. Makes several contacts with the 16S rRNA in the 70S ribosome. In Deinococcus geothermalis (strain DSM 11300 / CIP 105573 / AG-3a), this protein is Large ribosomal subunit protein uL2.